Here is a 110-residue protein sequence, read N- to C-terminus: U1-lycotoxin-Ls1kk (110 aa).

The N-terminal stretch at 1-20 is a signal peptide; that stretch reads MKFVLLFGVLLVTLFSYSSA. Residues 21 to 44 constitute a propeptide that is removed on maturation; the sequence is EMFDDFDQADEDELLSLIEKEEAR. Intrachain disulfides connect Cys47–Cys62, Cys54–Cys71, Cys61–Cys89, and Cys73–Cys87.

It belongs to the neurotoxin 19 (CSTX) family. 03 subfamily. As to expression, expressed by the venom gland.

The protein localises to the secreted. The polypeptide is U1-lycotoxin-Ls1kk (Lycosa singoriensis (Wolf spider)).